The chain runs to 178 residues: Ribosome maturation factor RimM (178 aa).

The PRC barrel domain occupies 101-178; the sequence is ADEYYWYQLE…VMRVEWDADF (78 aa).

The protein belongs to the RimM family. Binds ribosomal protein uS19.

Its subcellular location is the cytoplasm. In terms of biological role, an accessory protein needed during the final step in the assembly of 30S ribosomal subunit, possibly for assembly of the head region. Essential for efficient processing of 16S rRNA. May be needed both before and after RbfA during the maturation of 16S rRNA. It has affinity for free ribosomal 30S subunits but not for 70S ribosomes. The protein is Ribosome maturation factor RimM of Pseudomonas fluorescens (strain Pf0-1).